Reading from the N-terminus, the 379-residue chain is Anhydro-N-acetylmuramic acid kinase (379 aa).

Residue 9 to 16 participates in ATP binding; the sequence is GTSVDGID.

Belongs to the anhydro-N-acetylmuramic acid kinase family.

It carries out the reaction 1,6-anhydro-N-acetyl-beta-muramate + ATP + H2O = N-acetyl-D-muramate 6-phosphate + ADP + H(+). Its pathway is amino-sugar metabolism; 1,6-anhydro-N-acetylmuramate degradation. It functions in the pathway cell wall biogenesis; peptidoglycan recycling. Functionally, catalyzes the specific phosphorylation of 1,6-anhydro-N-acetylmuramic acid (anhMurNAc) with the simultaneous cleavage of the 1,6-anhydro ring, generating MurNAc-6-P. Is required for the utilization of anhMurNAc either imported from the medium or derived from its own cell wall murein, and thus plays a role in cell wall recycling. The polypeptide is Anhydro-N-acetylmuramic acid kinase (Acaryochloris marina (strain MBIC 11017)).